Reading from the N-terminus, the 350-residue chain is Holliday junction branch migration complex subunit RuvB (350 aa).

The large ATPase domain (RuvB-L) stretch occupies residues 1-186 (MAGHEEEDER…FGIPLRLDFY (186 aa)). ATP-binding positions include leucine 25, arginine 26, glycine 67, lysine 70, threonine 71, threonine 72, 133 to 135 (EDF), arginine 176, tyrosine 186, and arginine 223. Residue threonine 71 participates in Mg(2+) binding. The interval 187 to 257 (ETDELVQIVT…IADAALNRLE (71 aa)) is small ATPAse domain (RuvB-S). The segment at 260–350 (GRGLDAMDRR…VQPDLWSDAP (91 aa)) is head domain (RuvB-H). DNA is bound by residues arginine 296, arginine 315, and arginine 320.

This sequence belongs to the RuvB family. Homohexamer. Forms an RuvA(8)-RuvB(12)-Holliday junction (HJ) complex. HJ DNA is sandwiched between 2 RuvA tetramers; dsDNA enters through RuvA and exits via RuvB. An RuvB hexamer assembles on each DNA strand where it exits the tetramer. Each RuvB hexamer is contacted by two RuvA subunits (via domain III) on 2 adjacent RuvB subunits; this complex drives branch migration. In the full resolvosome a probable DNA-RuvA(4)-RuvB(12)-RuvC(2) complex forms which resolves the HJ.

Its subcellular location is the cytoplasm. The enzyme catalyses ATP + H2O = ADP + phosphate + H(+). The RuvA-RuvB-RuvC complex processes Holliday junction (HJ) DNA during genetic recombination and DNA repair, while the RuvA-RuvB complex plays an important role in the rescue of blocked DNA replication forks via replication fork reversal (RFR). RuvA specifically binds to HJ cruciform DNA, conferring on it an open structure. The RuvB hexamer acts as an ATP-dependent pump, pulling dsDNA into and through the RuvAB complex. RuvB forms 2 homohexamers on either side of HJ DNA bound by 1 or 2 RuvA tetramers; 4 subunits per hexamer contact DNA at a time. Coordinated motions by a converter formed by DNA-disengaged RuvB subunits stimulates ATP hydrolysis and nucleotide exchange. Immobilization of the converter enables RuvB to convert the ATP-contained energy into a lever motion, pulling 2 nucleotides of DNA out of the RuvA tetramer per ATP hydrolyzed, thus driving DNA branch migration. The RuvB motors rotate together with the DNA substrate, which together with the progressing nucleotide cycle form the mechanistic basis for DNA recombination by continuous HJ branch migration. Branch migration allows RuvC to scan DNA until it finds its consensus sequence, where it cleaves and resolves cruciform DNA. The polypeptide is Holliday junction branch migration complex subunit RuvB (Rhodospirillum rubrum (strain ATCC 11170 / ATH 1.1.1 / DSM 467 / LMG 4362 / NCIMB 8255 / S1)).